A 332-amino-acid chain; its full sequence is MESLLNQLSSMTVVVADTGDLEAIKKYHPRDATTNPSLILAAAQMPAYQSLIDQALTTSREMLGTSAAKVDVVKEALDELCVVFGKEILKLIPGRVSTEVDARLSFDTDATIEKARKIIAKYNADGISNDRVLIKIASTWEGIKAAEVLEKENIHCNLTLLFNFYQAVACAEAGVTLISPFVGRILDWYKSATGRDSYPATEDPGVVSVTKIFNYFKSNGYKTEVMGASFRNIEEITELAGCDLLTISPKLLQQLNETHTDLPIKLNAQKPLVIEEKIHLDQTSFELMMAGDKMATEKLDDGISGFSKAIDKLENQLNERLELIEGGVALTL.

Residue Lys135 is the Schiff-base intermediate with substrate of the active site.

The protein belongs to the transaldolase family. Type 1 subfamily. Homodimer.

Its subcellular location is the cytoplasm. It carries out the reaction D-sedoheptulose 7-phosphate + D-glyceraldehyde 3-phosphate = D-erythrose 4-phosphate + beta-D-fructose 6-phosphate. Its pathway is carbohydrate degradation; pentose phosphate pathway; D-glyceraldehyde 3-phosphate and beta-D-fructose 6-phosphate from D-ribose 5-phosphate and D-xylulose 5-phosphate (non-oxidative stage): step 2/3. In terms of biological role, transaldolase is important for the balance of metabolites in the pentose-phosphate pathway. The polypeptide is Transaldolase (Prochlorococcus marinus (strain NATL1A)).